The following is a 126-amino-acid chain: MHHRKSGRHLNRTSAHRKAMLRNMAVSLFQHELIKTTLPKAKELRRVVEPLITLAKEDTVANRRLAFNRLRDDAIVAKLFKEIAPRHKERPGGYCRVLKYGFRNGDSAPMAIVELVDREESESSED.

Belongs to the bacterial ribosomal protein bL17 family. As to quaternary structure, part of the 50S ribosomal subunit. Contacts protein L32.

The protein is Large ribosomal subunit protein bL17 of Coxiella burnetii (strain CbuG_Q212) (Coxiella burnetii (strain Q212)).